The primary structure comprises 828 residues: Periplasmic nitrate reductase (828 aa).

Positions 1 to 31 form a signal peptide, tat-type signal; the sequence is MKLSRRSFMKANAVAAAAAAAGLSVPGVARA. Positions 39–95 constitute a 4Fe-4S Mo/W bis-MGD-type domain; that stretch reads IKWDKAPCRFCGTGCGVLVGTQQGRVVACQGDPDAPVNRGLNCIKGYFLPKIMYGKD. [4Fe-4S] cluster is bound by residues Cys-46, Cys-49, Cys-53, and Cys-81. Mo-bis(molybdopterin guanine dinucleotide) is bound by residues Lys-83, Gln-150, Asn-175, Cys-179, 212-219, 243-247, 262-264, Met-372, Gln-376, Asn-482, 508-509, Lys-531, Asp-558, and 718-727; these read WGANMAEM, STYQH, QSD, SD, and TGRVLEHWHT. Phe-794 contributes to the substrate binding site. Residues Asn-802 and Lys-819 each contribute to the Mo-bis(molybdopterin guanine dinucleotide) site.

The protein belongs to the prokaryotic molybdopterin-containing oxidoreductase family. NasA/NapA/NarB subfamily. Component of the periplasmic nitrate reductase NapAB complex composed of NapA and NapB. [4Fe-4S] cluster serves as cofactor. Requires Mo-bis(molybdopterin guanine dinucleotide) as cofactor. Predicted to be exported by the Tat system. The position of the signal peptide cleavage has not been experimentally proven.

The protein resides in the periplasm. The catalysed reaction is 2 Fe(II)-[cytochrome] + nitrate + 2 H(+) = 2 Fe(III)-[cytochrome] + nitrite + H2O. Its function is as follows. Catalytic subunit of the periplasmic nitrate reductase complex NapAB. Receives electrons from NapB and catalyzes the reduction of nitrate to nitrite. The sequence is that of Periplasmic nitrate reductase from Escherichia coli O8 (strain IAI1).